Here is a 621-residue protein sequence, read N- to C-terminus: UvrABC system protein C (621 aa).

A GIY-YIG domain is found at 13 to 92 (NEPGVYLMKN…IKKYSPKYNI (80 aa)). The UVR domain occupies 204–239 (RSLLNKLKEEMQSASGNLEFEKAASLRDKMIAIENI).

The protein belongs to the UvrC family. In terms of assembly, interacts with UvrB in an incision complex.

It is found in the cytoplasm. The UvrABC repair system catalyzes the recognition and processing of DNA lesions. UvrC both incises the 5' and 3' sides of the lesion. The N-terminal half is responsible for the 3' incision and the C-terminal half is responsible for the 5' incision. This is UvrABC system protein C from Clostridium beijerinckii (strain ATCC 51743 / NCIMB 8052) (Clostridium acetobutylicum).